A 512-amino-acid polypeptide reads, in one-letter code: GMP synthase [glutamine-hydrolyzing] (512 aa).

One can recognise a Glutamine amidotransferase type-1 domain in the interval 7-197 (TIIVLDFGSQ…VFGVCGCSEG (191 aa)). The Nucleophile role is filled by Cys84. Residues His171 and Glu173 contribute to the active site. A GMPS ATP-PPase domain is found at 198-387 (WNMENFIEVE…LGIPDEIVWR (190 aa)). 225–231 (SGGVDSS) lines the ATP pocket.

In terms of assembly, homodimer.

The catalysed reaction is XMP + L-glutamine + ATP + H2O = GMP + L-glutamate + AMP + diphosphate + 2 H(+). It functions in the pathway purine metabolism; GMP biosynthesis; GMP from XMP (L-Gln route): step 1/1. Functionally, catalyzes the synthesis of GMP from XMP. This Bacillus cereus (strain G9842) protein is GMP synthase [glutamine-hydrolyzing].